A 467-amino-acid polypeptide reads, in one-letter code: Probable circularly permuted 1,3-beta-glucanase TOS1 (467 aa).

Residues 1-21 (MKFSSTTLLAGLSSLTATVSA) form the signal peptide. Positions 158 to 172 (PAVSSAAADDNANSG) are enriched in low complexity. 2 disordered regions span residues 158–187 (PAVS…GYGS) and 200–223 (SDIS…TASV). Positions 173 to 185 (SGSGSSAGSGSGY) are enriched in gly residues. Over residues 203 to 222 (STKSAPTSTSAQPSSSETAS) the composition is skewed to low complexity. The short motif at 374 to 379 (ELDLFE) is the ExDxxE motif element. Positions 391–413 (HLHDGQGSSQNSNNGGGGSQDYF) are disordered.

The protein belongs to the PGA52 family. In terms of processing, cleaved by KEX2 in vitro.

Its subcellular location is the secreted. The catalysed reaction is Hydrolysis of (1-&gt;3)-beta-D-glucosidic linkages in (1-&gt;3)-beta-D-glucans.. In terms of biological role, probable circularly permuted 1,3-beta-glucanase involved in cell wall modification through beta-1,3-glucan network alterations such as increased branching or remodeling. Plays a role in engulfment by host macrophages. The protein is Probable circularly permuted 1,3-beta-glucanase TOS1 of Candida albicans (strain SC5314 / ATCC MYA-2876) (Yeast).